An 83-amino-acid chain; its full sequence is Translation initiation factor IF-1 (83 aa).

Positions 1-72 constitute an S1-like domain; the sequence is MAKEESIEMQ…TRGRIVYREA (72 aa).

It belongs to the IF-1 family. As to quaternary structure, component of the 30S ribosomal translation pre-initiation complex which assembles on the 30S ribosome in the order IF-2 and IF-3, IF-1 and N-formylmethionyl-tRNA(fMet); mRNA recruitment can occur at any time during PIC assembly.

It localises to the cytoplasm. One of the essential components for the initiation of protein synthesis. Stabilizes the binding of IF-2 and IF-3 on the 30S subunit to which N-formylmethionyl-tRNA(fMet) subsequently binds. Helps modulate mRNA selection, yielding the 30S pre-initiation complex (PIC). Upon addition of the 50S ribosomal subunit IF-1, IF-2 and IF-3 are released leaving the mature 70S translation initiation complex. The chain is Translation initiation factor IF-1 from Coxiella burnetii (strain Dugway 5J108-111).